A 191-amino-acid chain; its full sequence is ATP-dependent Clp protease proteolytic subunit 1 (191 aa).

The active-site Nucleophile is Ser-91. The active site involves His-116.

It belongs to the peptidase S14 family. In terms of assembly, fourteen ClpP subunits assemble into 2 heptameric rings which stack back to back to give a disk-like structure with a central cavity, resembling the structure of eukaryotic proteasomes.

The protein localises to the cytoplasm. It catalyses the reaction Hydrolysis of proteins to small peptides in the presence of ATP and magnesium. alpha-casein is the usual test substrate. In the absence of ATP, only oligopeptides shorter than five residues are hydrolyzed (such as succinyl-Leu-Tyr-|-NHMec, and Leu-Tyr-Leu-|-Tyr-Trp, in which cleavage of the -Tyr-|-Leu- and -Tyr-|-Trp bonds also occurs).. Its function is as follows. Cleaves peptides in various proteins in a process that requires ATP hydrolysis. Has a chymotrypsin-like activity. Plays a major role in the degradation of misfolded proteins. This chain is ATP-dependent Clp protease proteolytic subunit 1, found in Chlamydia caviae (strain ATCC VR-813 / DSM 19441 / 03DC25 / GPIC) (Chlamydophila caviae).